A 409-amino-acid chain; its full sequence is S-adenosylmethionine synthase (409 aa).

Residue 141–146 (GQGSAD) participates in ATP binding.

Belongs to the AdoMet synthase 2 family. Mg(2+) serves as cofactor.

It carries out the reaction L-methionine + ATP + H2O = S-adenosyl-L-methionine + phosphate + diphosphate. It participates in amino-acid biosynthesis; S-adenosyl-L-methionine biosynthesis; S-adenosyl-L-methionine from L-methionine: step 1/1. In terms of biological role, catalyzes the formation of S-adenosylmethionine from methionine and ATP. This is S-adenosylmethionine synthase from Hyperthermus butylicus (strain DSM 5456 / JCM 9403 / PLM1-5).